A 229-amino-acid polypeptide reads, in one-letter code: ATPase SWSAP1 (229 aa).

The tract at residues 209–229 (PWPTQAGDPSSGKGSSSGGQP) is disordered.

Interacts with ZSWIM7; they form a functional complex involved in homologous recombination repair and stabilize each other. Interacts with RAD51, RAD51B, RAD51C, RAD51D and XRCC3; involved in homologous recombination repair.

Its subcellular location is the nucleus. Its function is as follows. ATPase which is preferentially stimulated by single-stranded DNA and is involved in homologous recombination repair (HRR). Has a DNA-binding activity which is independent of its ATPase activity. This chain is ATPase SWSAP1 (SWSAP1), found in Homo sapiens (Human).